The sequence spans 152 residues: MGLFSSINVASTGLTAQRLRIDVISNNIANVSTSRTPDGGPYRRQRIIFAPRVNNPYWKGPFIPDYLDNGIGQGVRVASIEKDKSPLKLKYDPAHPDSISSGDKKGYVELPNVNLVEEMVDMISASRAYEANSTVINSSKSMFRSALAILQG.

The protein belongs to the flagella basal body rod proteins family. In terms of assembly, the basal body constitutes a major portion of the flagellar organelle and consists of four rings (L,P,S, and M) mounted on a central rod. The rod consists of about 26 subunits of FlgG in the distal portion, and FlgB, FlgC and FlgF are thought to build up the proximal portion of the rod with about 6 subunits each.

Its subcellular location is the bacterial flagellum basal body. This Borreliella burgdorferi (strain ATCC 35210 / DSM 4680 / CIP 102532 / B31) (Borrelia burgdorferi) protein is Flagellar basal-body rod protein FlgC (flgC).